A 137-amino-acid polypeptide reads, in one-letter code: Basic phospholipase A2 homolog 2 (137 aa).

Positions 1–16 (MRTLWIMAVLLVGVEG) are cleaved as a signal peptide. Cystine bridges form between Cys-42-Cys-131, Cys-44-Cys-60, Cys-59-Cys-111, Cys-65-Cys-137, Cys-66-Cys-104, Cys-73-Cys-97, and Cys-91-Cys-102. An important for membrane-damaging activities in eukaryotes and bacteria; heparin-binding region spans residues 121-133 (KKYRYYLKPLCKK).

The protein belongs to the phospholipase A2 family. Group II subfamily. K49 sub-subfamily. As to quaternary structure, homodimer; non-covalently linked. Binds to heparin. Post-translationally, it binds long-chain fatty acids covalently by a rapid, spontaneous, and autocatalytic process. When acylated, it binds to the surface of liposomes and isolated muscle membranes, with the fatty acid moiety inserted into the lipid bilayer and possibly acting as an anchor. In terms of tissue distribution, expressed by the venom gland.

It localises to the secreted. Heparin inhibits the myotoxic activity. Suramin inhibits the myotoxic activity. High level of membrane cholesterol content reduces cytolytic activity, whereas low level of membrane cholesterol content increases cytolytic activity. Snake venom phospholipase A2 homolog that lacks enzymatic activity. Is myotoxic and induces a dose-dependent edema in the mouse foot pad. Also exhibits strong anticoagulant effects by binding to factor Xa (F10) and inhibiting the prothrombinase activity (IC(50) is 3 nM). In addition, it shows cytotoxic activity to a variety of cell types and bactericidal activity to a variety of Gram-negative and Gram-positive bacteria. Also induces a very rapid release of large amounts of potassium ions and ATP from muscle cells, which accounts for the pain reaction characteristic of viperid envenomations. The released ATP amplifies the effect of the myotoxins, acting as a 'danger signal', which spreads and causes further damage by acting on purinergic receptors. A model of myotoxic mechanism has been proposed: an apo Lys49-PLA2 is activated by the entrance of a hydrophobic molecule (e.g. fatty acid) at the hydrophobic channel of the protein leading to a reorientation of a monomer. This reorientation causes a transition between 'inactive' to 'active' states, causing alignment of C-terminal and membrane-docking sites (MDoS) side-by-side and putting the membrane-disruption sites (MDiS) in the same plane, exposed to solvent and in a symmetric position for both monomers. The MDoS region stabilizes the toxin on membrane by the interaction of charged residues with phospholipid head groups. Subsequently, the MDiS region destabilizes the membrane with penetration of hydrophobic residues. This insertion causes a disorganization of the membrane, allowing an uncontrolled influx of ions (i.e. calcium and sodium), and eventually triggering irreversible intracellular alterations and cell death. The sequence is that of Basic phospholipase A2 homolog 2 from Bothrops asper (Terciopelo).